Consider the following 843-residue polypeptide: Proto-oncogene vav (843 aa).

The Calponin-homology (CH) domain occupies 1-119 (MELWRQCTHW…YTLSALSWTP (119 aa)). Residues 194–373 (KRCCCLREIQ…RDLAQCVNEV (180 aa)) form the DH domain. The PH domain maps to 402–504 (RPKIDGELKI…WMEQFEMAIS (103 aa)). Residues 515–564 (GHDFQMFSFEETTSCKACQMLLRGTFYQGYRCYRCRAPAHKECLGRVPPC) form a Phorbol-ester/DAG-type zinc finger. One can recognise an SH3 1 domain in the interval 590-658 (LGLPKMEVCQ…PCNRVRPYVH (69 aa)). Positions 669 to 763 (WYAGPMERAG…SLDTTLQFPY (95 aa)) constitute an SH2 domain. The SH3 2 domain occupies 780-840 (KYFGTAKARY…PSNYVEEDYS (61 aa)). Tyr824 and Tyr842 each carry phosphotyrosine.

Interacts with SHB. Interacts with APS, DOCK2, GRB2, GRB3, DOCK2, SLA, TEC and ZNF655/VIK. Interacts with SIAH2; without leading to its degradation. Associates with BLNK, PLCG1, GRB2 and NCK1 in a B-cell antigen receptor-dependent fashion. Interacts with CBLB; which inhibits tyrosine phosphorylation and down-regulates activity. May interact with CCPG1. Interacts with CLNK. Interacts with THEMIS2. Interacts with NEK3 and this interaction is prolactin-dependent. Interacts with ITK. Interacts with PTK2B/PYK2. Interacts with HCK. Interacts with PTK2B/PYK2. Interacts (via SH2 domain) with SYK. Interacts with ANKRD54. Interacts with CD6. Interacts with LCP2; this interaction plays a role in TCR-mediated cytokine production. Post-translationally, phosphorylated by FYN. Phosphorylated on tyrosine residues by HCK in response to IFNG and bacterial lipopolysaccharide (LPS).

Its function is as follows. Couples tyrosine kinase signals with the activation of the Rho/Rac GTPases, thus leading to cell differentiation and/or proliferation. The protein is Proto-oncogene vav (Vav1) of Rattus norvegicus (Rat).